The following is a 373-amino-acid chain: Histidinol-phosphate aminotransferase (373 aa).

Residue lysine 233 is modified to N6-(pyridoxal phosphate)lysine.

This sequence belongs to the class-II pyridoxal-phosphate-dependent aminotransferase family. Histidinol-phosphate aminotransferase subfamily. In terms of assembly, homodimer. Requires pyridoxal 5'-phosphate as cofactor.

The catalysed reaction is L-histidinol phosphate + 2-oxoglutarate = 3-(imidazol-4-yl)-2-oxopropyl phosphate + L-glutamate. The protein operates within amino-acid biosynthesis; L-histidine biosynthesis; L-histidine from 5-phospho-alpha-D-ribose 1-diphosphate: step 7/9. The protein is Histidinol-phosphate aminotransferase of Nitratidesulfovibrio vulgaris (strain ATCC 29579 / DSM 644 / CCUG 34227 / NCIMB 8303 / VKM B-1760 / Hildenborough) (Desulfovibrio vulgaris).